Here is a 383-residue protein sequence, read N- to C-terminus: Pentatricopeptide repeat-containing protein 2, mitochondrial (383 aa).

Residues 161–195 form a PPR repeat; sequence TSFNILMDMLFIKGKYKSALEVLIEMKNQNVKFTT. S377 is subject to Phosphoserine.

This sequence belongs to the PTCD2 family.

The protein localises to the mitochondrion. Functionally, involved in mitochondrial RNA maturation and mitochondrial respiratory chain function. This Pongo abelii (Sumatran orangutan) protein is Pentatricopeptide repeat-containing protein 2, mitochondrial (PTCD2).